A 229-amino-acid chain; its full sequence is Prolactin (229 aa).

Positions M1–S30 are cleaved as a signal peptide. 3 disulfide bridges follow: C34–C41, C88–C204, and C221–C229.

Belongs to the somatotropin/prolactin family.

Its subcellular location is the secreted. The protein is Prolactin (PRL) of Gallus gallus (Chicken).